The following is a 265-amino-acid chain: Dehydrin COR47 (265 aa).

Positions 1-14 (MAEEYKNNVPEHET) are enriched in basic and acidic residues. Residues 1–265 (MAEEYKNNVP…EVKKEKESDD (265 aa)) are disordered. Residue alanine 2 is modified to N-acetylalanine. Polar residues predominate over residues 16-28 (TVATEESPATTTE). Residues 29–47 (VTDRGLFDFLGKKEEEVKP) are compositionally biased toward basic and acidic residues. Phosphoserine is present on serine 64. Residues 69–79 (AAEHEEVKENK) show a composition bias toward basic and acidic residues. Phosphothreonine is present on threonine 90. 2 stretches are compositionally biased toward basic and acidic residues: residues 96-105 (NKPSVIEKLH) and 129-156 (IVEGEEDKKGLVEKIKEKLPGHHDKTAE). Repeat unit 1 spans residues 133-153 (EEDKKGLVEKIKEKLPGHHDK). The 3 X 21 AA repeats, Lys-rich stretch occupies residues 133–251 (EEDKKGLVEK…KEKLPGYHAK (119 aa)). Positions 160–172 (PVSTTIPVPVSES) are enriched in low complexity. Basic and acidic residues-rich tracts occupy residues 173–204 (VVEHDHPEEEKKGLVEKIKEKLPGHHDEKAED) and 227–265 (PVEHPEEKKGILEKIKEKLPGYHAKTTEEEVKKEKESDD). A run of 2 repeats spans residues 180-200 (EEEKKGLVEKIKEKLPGHHDE) and 231-251 (PEEKKGILEKIKEKLPGYHAK).

The protein belongs to the plant dehydrin family.

The polypeptide is Dehydrin COR47 (COR47) (Arabidopsis thaliana (Mouse-ear cress)).